We begin with the raw amino-acid sequence, 402 residues long: Arginine deiminase (402 aa).

Cys-392 (amidino-cysteine intermediate) is an active-site residue.

The protein belongs to the arginine deiminase family.

It is found in the cytoplasm. The catalysed reaction is L-arginine + H2O = L-citrulline + NH4(+). It functions in the pathway amino-acid degradation; L-arginine degradation via ADI pathway; carbamoyl phosphate from L-arginine: step 1/2. This chain is Arginine deiminase (arcA), found in Mycobacterium bovis (strain ATCC BAA-935 / AF2122/97).